We begin with the raw amino-acid sequence, 372 residues long: Cyclin-J (372 aa).

The Cyclin N-terminal domain maps to 15-143; the sequence is DIHQALRYKE…LLETFQWNLC (129 aa).

The protein belongs to the cyclin family.

This chain is Cyclin-J (CCNJ), found in Homo sapiens (Human).